Here is a 376-residue protein sequence, read N- to C-terminus: Chaperone protein DnaJ (376 aa).

In terms of domain architecture, J spans D5 to G70. The segment at G132 to S210 adopts a CR-type zinc-finger fold. The Zn(2+) site is built by C145, C148, C162, C165, C184, C187, C198, and C201. CXXCXGXG motif repeat units follow at residues C145–G152, C162–G169, C184–G191, and C198–G205.

The protein belongs to the DnaJ family. Homodimer. Requires Zn(2+) as cofactor.

The protein resides in the cytoplasm. Functionally, participates actively in the response to hyperosmotic and heat shock by preventing the aggregation of stress-denatured proteins and by disaggregating proteins, also in an autonomous, DnaK-independent fashion. Unfolded proteins bind initially to DnaJ; upon interaction with the DnaJ-bound protein, DnaK hydrolyzes its bound ATP, resulting in the formation of a stable complex. GrpE releases ADP from DnaK; ATP binding to DnaK triggers the release of the substrate protein, thus completing the reaction cycle. Several rounds of ATP-dependent interactions between DnaJ, DnaK and GrpE are required for fully efficient folding. Also involved, together with DnaK and GrpE, in the DNA replication of plasmids through activation of initiation proteins. The sequence is that of Chaperone protein DnaJ from Shewanella piezotolerans (strain WP3 / JCM 13877).